We begin with the raw amino-acid sequence, 159 residues long: Protein phosphatase 1 regulatory subunit 17 (159 aa).

Disordered stretches follow at residues Met1–Pro79 and Arg98–His127. Composition is skewed to basic and acidic residues over residues Ser62 to Pro73 and Ser111 to Pro124. A phosphothreonine; by PKG/PRKG1 mark is found at Thr72 and Thr123.

Post-translationally, substrate for cGMP-dependent protein kinase. Phosphorylation of Thr-72 and Thr-123 is required for its phosphatase activity. Phosphorylated by PRKG1 isoform alpha. Expressed in Purkinje cells of the cerebellum, hippocampus, pons, medulla and eye.

Functionally, inhibits phosphatase activities of protein phosphatase 1 (PP1) and protein phosphatase 2A (PP2A) complexes. This Mus musculus (Mouse) protein is Protein phosphatase 1 regulatory subunit 17 (Ppp1r17).